The sequence spans 427 residues: cAMP-dependent protein kinase regulatory subunit (427 aa).

The dimerization and phosphorylation stretch occupies residues 38–184; it reads QFCSNFFIRK…RIKVSISNNF (147 aa). The tract at residues 96-145 is disordered; it reads TTHMGHPNDHGALHDDDDDPLEDEDDEEFDKFSTEPLPSLPPTNYNRGRR. Residues 110–124 are compositionally biased toward acidic residues; sequence DDDDDPLEDEDDEEF. A Phosphoserine modification is found at S147. Residues 185 to 300, E250, R259, 303 to 422, E372, and R381 each bind 3',5'-cyclic AMP; these read LFRN…FLSE and LLKS…YHAV.

Belongs to the cAMP-dependent kinase regulatory chain family. As to quaternary structure, tetramer, composed of 2 regulatory (R) and 2 catalytic (C) subunits. In the presence of cAMP it dissociates into 2 active monomeric C subunits and an R dimer.

This Mucor circinelloides f. lusitanicus (Mucor racemosus var. lusitanicus) protein is cAMP-dependent protein kinase regulatory subunit (pkar).